The sequence spans 64 residues: Large ribosomal subunit protein bL32 (64 aa).

The protein belongs to the bacterial ribosomal protein bL32 family.

This is Large ribosomal subunit protein bL32 from Flavobacterium johnsoniae (strain ATCC 17061 / DSM 2064 / JCM 8514 / BCRC 14874 / CCUG 350202 / NBRC 14942 / NCIMB 11054 / UW101) (Cytophaga johnsonae).